We begin with the raw amino-acid sequence, 84 residues long: Beta-cardiotoxin CTX14 (84 aa).

Residues 1–21 (MKTLLLTLVVVTIVCLDLGYT) form the signal peptide. Intrachain disulfides connect Cys24–Cys43, Cys36–Cys61, Cys65–Cys76, and Cys77–Cys82.

Belongs to the three-finger toxin family. Short-chain subfamily. Aminergic toxin sub-subfamily. As to expression, expressed by the venom gland.

The protein localises to the secreted. Its function is as follows. Acts as a beta-blocker by binding to beta-1 and beta-2 adrenergic receptors (ADRB1 and ADRB2). It dose-dependently decreases the heart rate (bradycardia), whereas conventional cardiotoxins increases it. At 100 mg/kg, intraperitoneal injection into mice provokes labored breathing, impaired locomotion, lack of response to external stimuli, and death (after 30 minutes). The protein is Beta-cardiotoxin CTX14 of Ophiophagus hannah (King cobra).